The sequence spans 338 residues: Ornithine carbamoyltransferase (338 aa).

Carbamoyl phosphate is bound by residues 56 to 59, R107, and 134 to 137; these read STRT and HPTQ. L-ornithine contacts are provided by residues N168, D232, and 236 to 237; that span reads SM. Carbamoyl phosphate contacts are provided by residues 274–275 and R320; that span reads CL.

Belongs to the aspartate/ornithine carbamoyltransferase superfamily. OTCase family.

The protein resides in the cytoplasm. It catalyses the reaction carbamoyl phosphate + L-ornithine = L-citrulline + phosphate + H(+). Its pathway is amino-acid biosynthesis; L-arginine biosynthesis; L-arginine from L-ornithine and carbamoyl phosphate: step 1/3. Its function is as follows. Reversibly catalyzes the transfer of the carbamoyl group from carbamoyl phosphate (CP) to the N(epsilon) atom of ornithine (ORN) to produce L-citrulline. This Buchnera aphidicola subsp. Schizaphis graminum (strain Sg) protein is Ornithine carbamoyltransferase (argI).